A 270-amino-acid polypeptide reads, in one-letter code: tRNA pseudouridine synthase A (270 aa).

Catalysis depends on aspartate 55, which acts as the Nucleophile. Tyrosine 110 contributes to the substrate binding site.

Belongs to the tRNA pseudouridine synthase TruA family.

The catalysed reaction is uridine(38/39/40) in tRNA = pseudouridine(38/39/40) in tRNA. Its function is as follows. Formation of pseudouridine at positions 38, 39 and 40 in the anticodon stem and loop of transfer RNAs. The protein is tRNA pseudouridine synthase A of Methanoculleus marisnigri (strain ATCC 35101 / DSM 1498 / JR1).